The primary structure comprises 513 residues: Maturase K (513 aa).

This sequence belongs to the intron maturase 2 family. MatK subfamily.

The protein localises to the plastid. It localises to the chloroplast. Functionally, usually encoded in the trnK tRNA gene intron. Probably assists in splicing its own and other chloroplast group II introns. This Pinus parviflora (Japanese white pine) protein is Maturase K.